Here is a 905-residue protein sequence, read N- to C-terminus: Translation initiation factor IF-2 (905 aa).

3 disordered regions span residues 52 to 84 (QSHG…SKSV), 116 to 230 (AKKR…QKKT), and 269 to 318 (FEKE…FEKP). Positions 65–84 (KSKTTSTARVTGSSGKSKSV) are enriched in polar residues. The segment covering 116–138 (AKKRAEEEAKKREQVKKEAEERQ) has biased composition (basic and acidic residues). Positions 165–178 (VVVKKGSKAAAAAK) are enriched in low complexity. Composition is skewed to basic and acidic residues over residues 190–230 (PKVE…QKKT) and 269–278 (FEKERREIKR). The tr-type G domain maps to 406 to 575 (TRPPVVTIMG…NLQAELMELE (170 aa)). The segment at 415 to 422 (GHVDHGKT) is G1. Residue 415-422 (GHVDHGKT) coordinates GTP. Positions 440 to 444 (GITQH) are G2. The segment at 461–464 (DTPG) is G3. GTP is bound by residues 461-465 (DTPGH) and 515-518 (NKMD). The tract at residues 515 to 518 (NKMD) is G4. The interval 551–553 (SAK) is G5.

This sequence belongs to the TRAFAC class translation factor GTPase superfamily. Classic translation factor GTPase family. IF-2 subfamily.

It is found in the cytoplasm. Its function is as follows. One of the essential components for the initiation of protein synthesis. Protects formylmethionyl-tRNA from spontaneous hydrolysis and promotes its binding to the 30S ribosomal subunits. Also involved in the hydrolysis of GTP during the formation of the 70S ribosomal complex. The polypeptide is Translation initiation factor IF-2 (Psychrobacter sp. (strain PRwf-1)).